Consider the following 246-residue polypeptide: Eukaryotic translation initiation factor 6 (246 aa).

A phosphoserine; by CK1 mark is found at serine 174 and serine 175.

The protein belongs to the eIF-6 family. In terms of assembly, monomer. Associates with the 60S ribosomal subunit. In terms of processing, phosphorylation at Ser-174 and Ser-175 promotes nuclear export.

The protein localises to the cytoplasm. It localises to the nucleus. Its subcellular location is the nucleolus. In terms of biological role, binds to the 60S ribosomal subunit and prevents its association with the 40S ribosomal subunit to form the 80S initiation complex in the cytoplasm. Is also involved in ribosome biogenesis. Associates with pre-60S subunits in the nucleus and is involved in its nuclear export. The sequence is that of Eukaryotic translation initiation factor 6 from Sordaria macrospora (strain ATCC MYA-333 / DSM 997 / K(L3346) / K-hell).